The following is a 216-amino-acid chain: 1-Cys peroxiredoxin PER1 (216 aa).

Residues 4 to 159 (ITLGDTVPNL…VLRALDSLLM (156 aa)) form the Thioredoxin domain. The active-site Cysteine sulfenic acid (-SOH) intermediate is the C46. A Bipartite nuclear localization signal motif is present at residues 191 to 214 (KKMFPQGFKTADLPSKKGYLRHTE).

This sequence belongs to the peroxiredoxin family. Prx6 subfamily. Predominantly expressed in seed. Expressed in endosperm, embryo and aleurone cells. Also detected in young seedlings, abscission zones, stem branching points.

The protein resides in the nucleus. Its subcellular location is the cytoplasm. The catalysed reaction is a hydroperoxide + [thioredoxin]-dithiol = an alcohol + [thioredoxin]-disulfide + H2O. Functionally, thiol-specific peroxidase that catalyzes the reduction of hydrogen peroxide and organic hydroperoxides to water and alcohols, respectively. Seems to contribute to the inhibition of germination during stress. The chain is 1-Cys peroxiredoxin PER1 (PER1) from Arabidopsis thaliana (Mouse-ear cress).